The primary structure comprises 297 residues: MEGACASTYRSVSIKTKNKLNAAALVSGKGHQDENFPVASFLINPEYRPIIMAFYQFARQADDVADNVIASKKDRLAILEDMRSSLTGESQSEPNAVVLRQTLITHGLDHTIVHGLDLLEAFRRDVSVNRYENWDALMDYCRYSASPVGRFVLDVHKESRNLWPMNDALCTALQVINHLQDCGKDYRMMNRIYIPSDIMEAVGATAGDLGRFHASLPLRQAIETAALKTKSLLKRSSGFSAAIHDKRLGVEVAVIQRLAESLTECLTKHDPLSERVHHNKAETLGLAFVAAAGRLFS.

It belongs to the phytoene/squalene synthase family. HpnC subfamily.

The enzyme catalyses presqualene diphosphate + H2O = hydroxysqualene + diphosphate. It functions in the pathway secondary metabolite biosynthesis; hopanoid biosynthesis. Its function is as follows. Involved in the biosynthesis of the hopanoid precursor squalene (SQ) from farnesyl diphosphate (FPP). Catalyzes the second step, the conversion of presqualene diphosphate (PSPP) to hydroxysqualene (HSQ). This Zymomonas mobilis subsp. mobilis (strain ATCC 31821 / ZM4 / CP4) protein is Hydroxysqualene synthase.